Consider the following 378-residue polypeptide: UPF0754 membrane protein BCE_0952 (378 aa).

Transmembrane regions (helical) follow at residues Met1–Thr21 and Tyr357–Leu377.

It belongs to the UPF0754 family.

Its subcellular location is the cell membrane. This Bacillus cereus (strain ATCC 10987 / NRS 248) protein is UPF0754 membrane protein BCE_0952.